The following is a 470-amino-acid chain: Aminoacyl transferase sphA (470 aa).

Positions 212, 244, and 272 each coordinate pyridoxal 5'-phosphate. Lys275 carries the post-translational modification N6-(pyridoxal phosphate)lysine.

The protein belongs to the class-II pyridoxal-phosphate-dependent aminotransferase family. BioF subfamily. Homodimer. Pyridoxal 5'-phosphate is required as a cofactor.

The catalysed reaction is aminomalonate + (3R)-hydroxyoctadeca-4,10-dienoyl-[ACP] = 3-oxopresphingofungin + holo-[ACP] + CO2. Its pathway is secondary metabolite biosynthesis. Aminoacyl transferase; part of the gene cluster that mediates the biosynthesis of sphingofungins, bioactive molecules acting as sphingolipid inhibitors via inhibiting serine palmitoyl transferase (SPT). Within the pathway, sphA transfers aminomalonate onto the sphB product 3-hydroxyoctadeca-4,10-dienoyl-ACP to produce 3-keto-presphingofungin. The substrate specificity of sphA using only aminomalonate in Aspergillus fumigatus is responsible for the biosynthesis of sphingofungins B and C but not E and F like in Byssochlamys spectabilis. The PKS sphB does not contain any putative thioesterase domain for releasing the nascent polyketide chain and it has been suggested that aminoacyl transferases can facilitate the polyketide chain release. Sphingofungin biosynthesis starts with the PKS sphB that produces an C18 polyketide precursor 3-hydroxyoctadeca-4,10-dienoyl-ACP containing one delta-6 desaturation and one delta-12 desaturation. The aminoacyl transferase sphA uses the sphB product to produce 3-keto-presphingofungin by adding an aminomalonate molecule. SphF then reduces the C-3 ketone of 3-keto-presphingofungin which leads to presphingofungin. The cytochrome P450 monooxygenase sphH converts presphingofungin into sphingofungin B1 which is further converted to sphingofungin B by the dioxygenase sphC. SphC is also able to convert presphingofungin into sphingofungin B2. The acetyltransferase sphE acetylates sphingofungin B to produce sphingofungin C, but can also convert sphingofungin B1 into sphingofungin C1 and sphingofungin B2 into sphingofungin C2. Finally, sphingofungin C can be spontaneously converted into sphingofungin D. The chain is Aminoacyl transferase sphA from Aspergillus fumigatus (strain CBS 144.89 / FGSC A1163 / CEA10) (Neosartorya fumigata).